Reading from the N-terminus, the 299-residue chain is Oxygen-dependent coproporphyrinogen-III oxidase (299 aa).

Serine 92 lines the substrate pocket. Residues histidine 96 and histidine 106 each coordinate Mn(2+). Histidine 106 (proton donor) is an active-site residue. Position 108 to 110 (108 to 110 (NVR)) interacts with substrate. Residues histidine 145 and histidine 175 each coordinate Mn(2+). Positions 240–275 (YVEFNLVWDRGTLFGLQTGGRTESILMSMPPLVRWE) are important for dimerization. 258 to 260 (GGR) is a binding site for substrate.

It belongs to the aerobic coproporphyrinogen-III oxidase family. As to quaternary structure, homodimer. Mn(2+) is required as a cofactor.

It localises to the cytoplasm. The catalysed reaction is coproporphyrinogen III + O2 + 2 H(+) = protoporphyrinogen IX + 2 CO2 + 2 H2O. Its pathway is porphyrin-containing compound metabolism; protoporphyrin-IX biosynthesis; protoporphyrinogen-IX from coproporphyrinogen-III (O2 route): step 1/1. Functionally, involved in the heme biosynthesis. Catalyzes the aerobic oxidative decarboxylation of propionate groups of rings A and B of coproporphyrinogen-III to yield the vinyl groups in protoporphyrinogen-IX. In Escherichia coli (strain K12 / MC4100 / BW2952), this protein is Oxygen-dependent coproporphyrinogen-III oxidase.